We begin with the raw amino-acid sequence, 179 residues long: Large ribosomal subunit protein uL5 (179 aa).

This sequence belongs to the universal ribosomal protein uL5 family. In terms of assembly, part of the 50S ribosomal subunit; part of the 5S rRNA/L5/L18/L25 subcomplex. Contacts the 5S rRNA and the P site tRNA. Forms a bridge to the 30S subunit in the 70S ribosome.

This is one of the proteins that bind and probably mediate the attachment of the 5S RNA into the large ribosomal subunit, where it forms part of the central protuberance. In the 70S ribosome it contacts protein S13 of the 30S subunit (bridge B1b), connecting the 2 subunits; this bridge is implicated in subunit movement. Contacts the P site tRNA; the 5S rRNA and some of its associated proteins might help stabilize positioning of ribosome-bound tRNAs. This is Large ribosomal subunit protein uL5 from Pseudomonas entomophila (strain L48).